We begin with the raw amino-acid sequence, 180 residues long: Napin (180 aa).

The N-terminal stretch at 1–21 is a signal peptide; the sequence is MANKLFLVSATLAFFFLLTNA. Propeptides lie at residues 22–38 and 75–94; these read SIYR…ATNP and PSWT…NPQG.

This sequence belongs to the 2S seed storage albumins family. As to quaternary structure, the mature protein consists of a small and a large chain linked by disulfide bonds. Cotyledons and the axis.

Its function is as follows. The small, basic, water-soluble napins are one of the two major kinds of storage proteins synthesized in the seed during its maturation. This is Napin (NAP1) from Brassica napus (Rape).